The primary structure comprises 477 residues: MGRTLAEKVWDDHVVRRAEGEPDLLFIDLHLLHEVTSPQAFDGLRQAGRPVRRLDLTIATEDHNTPTLDIDKPIADPVSRAQLETLRKNCAEFGVRLHSLGDVEQGVVHVVGPQLGLTQPGTTVVCGDSHTSTHGAFGALAFGIGTSQVEHVLATQTLPLARPKTMAITVDGELPDGVTAKDLILAIIARIGTGGGQGYILEYRGSAIEKLSMEARMTICNMSIEAGARAGMIAPDETTFAYLKGRAHAPEGEEWDAAVAYWKTLKSDEDAEFDAEVVIAAAALSPFVTWGTNPGQGAPLSASVPDPASYEDASERFAAEKALEYMGLTAGQPLRDIKVDTVFVGSCTNGRIEDLRAAAAIVEGRKVADGVRMLIVPGSARVGLQAVSEGLDVVFKEAGAEWRHAGCSMCLGMNPDQLAPGERSASTSNRNFEGRQGKGGRTHLVSPQVAAATAVLGHLASPADLADENAARTPAGV.

Cys347, Cys407, and Cys410 together coordinate [4Fe-4S] cluster. Residues 418-442 are disordered; sequence LAPGERSASTSNRNFEGRQGKGGRT.

It belongs to the aconitase/IPM isomerase family. LeuC type 1 subfamily. In terms of assembly, heterodimer of LeuC and LeuD. It depends on [4Fe-4S] cluster as a cofactor.

The enzyme catalyses (2R,3S)-3-isopropylmalate = (2S)-2-isopropylmalate. Its pathway is amino-acid biosynthesis; L-leucine biosynthesis; L-leucine from 3-methyl-2-oxobutanoate: step 2/4. In terms of biological role, catalyzes the isomerization between 2-isopropylmalate and 3-isopropylmalate, via the formation of 2-isopropylmaleate. This is 3-isopropylmalate dehydratase large subunit from Streptomyces avermitilis (strain ATCC 31267 / DSM 46492 / JCM 5070 / NBRC 14893 / NCIMB 12804 / NRRL 8165 / MA-4680).